We begin with the raw amino-acid sequence, 199 residues long: Cilia- and flagella-associated protein 20 (199 aa).

This sequence belongs to the CFAP20 family. As to expression, expressed in spermatocytes and chordotonal organs in sensory neurons of the antenna.

Its subcellular location is the nucleus. It localises to the nucleolus. The protein resides in the cell projection. It is found in the cilium. The protein localises to the cytoplasm. Its subcellular location is the cytoskeleton. It localises to the microtubule organizing center. The protein resides in the centrosome. It is found in the centriole. The protein localises to the flagellum. Its subcellular location is the cilium axoneme. Its function is as follows. Cilium- and flagellum-specific protein that plays a role in axonemal structure organization and motility. Microtubule inner protein (MIP) part of the dynein-decorated doublet microtubules (DMTs) in cilia axoneme, which is required for motile cilia beating. Involved in the regulation of the size and morphology of cilia. Required for sperm individualization, differentiation of the sperm flagellum and tubulin polyglycylation of axonemal microtubules. In Drosophila melanogaster (Fruit fly), this protein is Cilia- and flagella-associated protein 20.